The sequence spans 282 residues: NAD(P)H-hydrate epimerase (282 aa).

The transit peptide at 1–53 (MSGLRTLLGLGLLVAGSRLPRVISQQSVCRARPIWWGTQRRGSETMAGAAVKY) directs the protein to the mitochondrion. Ser43 is subject to Phosphoserine; by PKA. Residues 59 to 269 (AQAVDQELFN…ALEKKYQLNL (211 aa)) enclose the YjeF N-terminal domain. (6S)-NADPHX is bound at residue 113-117 (NNGGD). Asn114 is a K(+) binding site. Lys138 carries the post-translational modification N6-succinyllysine. Residue Asp179 coordinates K(+). Residues 183–189 (GFSFKGD) and Asp212 each bind (6S)-NADPHX. Ser215 is a K(+) binding site.

Belongs to the NnrE/AIBP family. As to quaternary structure, homodimer. Interacts with APOA1 and APOA2. The cofactor is K(+). Undergoes physiological phosphorylation during sperm capacitation, downstream to PKA activation. Detected in testis and sperm (at protein level). Expressed at high levels in heart, liver, kidney, and testis.

The protein resides in the mitochondrion. It localises to the secreted. It catalyses the reaction (6R)-NADHX = (6S)-NADHX. The enzyme catalyses (6R)-NADPHX = (6S)-NADPHX. Functionally, catalyzes the epimerization of the S- and R-forms of NAD(P)HX, a damaged form of NAD(P)H that is a result of enzymatic or heat-dependent hydration. This is a prerequisite for the S-specific NAD(P)H-hydrate dehydratase to allow the repair of both epimers of NAD(P)HX. Accelerates cholesterol efflux from endothelial cells to high-density lipoprotein (HDL) and thereby regulates angiogenesis. The sequence is that of NAD(P)H-hydrate epimerase from Mus musculus (Mouse).